The primary structure comprises 534 residues: CD276 antigen (534 aa).

Residues Met-1–Ala-28 form the signal peptide. Residues Leu-29 to Ala-139 enclose the Ig-like V-type 1 domain. Residues Leu-29–Ala-466 are Extracellular-facing. 4 disulfides stabilise this stretch: Cys-50-Cys-122, Cys-165-Cys-220, Cys-268-Cys-340, and Cys-383-Cys-438. 6 N-linked (GlcNAc...) asparagine glycosylation sites follow: Asn-104, Asn-189, Asn-215, Asn-322, Asn-407, and Asn-433. The Ig-like C2-type 1 domain occupies Pro-145–Thr-238. The Ig-like V-type 2 domain occupies Pro-243–Ala-357. The 94-residue stretch at Pro-363–Thr-456 folds into the Ig-like C2-type 2 domain. The helical transmembrane segment at Leu-467 to Val-487 threads the bilayer. The Cytoplasmic portion of the chain corresponds to Cys-488–Ala-534. Residues Glu-498–Gly-510 show a composition bias toward acidic residues. Residues Glu-498–Ala-534 are disordered. Ser-525 is subject to Phosphoserine.

The protein belongs to the immunoglobulin superfamily. BTN/MOG family. As to quaternary structure, interacts with TREML2 and this interaction enhances T-cell activation. In terms of tissue distribution, ubiquitous but not detectable in peripheral blood lymphocytes or granulocytes. Weakly expressed in resting monocytes. Expressed in dendritic cells derived from monocytes. Expressed in epithelial cells of sinonasal tissue. Expressed in extravillous trophoblast cells and Hofbauer cells of the first trimester placenta and term placenta.

It is found in the membrane. Its function is as follows. May participate in the regulation of T-cell-mediated immune response. May play a protective role in tumor cells by inhibiting natural-killer mediated cell lysis as well as a role of marker for detection of neuroblastoma cells. May be involved in the development of acute and chronic transplant rejection and in the regulation of lymphocytic activity at mucosal surfaces. Could also play a key role in providing the placenta and fetus with a suitable immunological environment throughout pregnancy. Both isoform 1 and isoform 2 appear to be redundant in their ability to modulate CD4 T-cell responses. Isoform 2 is shown to enhance the induction of cytotoxic T-cells and selectively stimulates interferon gamma production in the presence of T-cell receptor signaling. This is CD276 antigen (CD276) from Homo sapiens (Human).